A 372-amino-acid chain; its full sequence is E3 ubiquitin-protein ligase RNF34 (372 aa).

The FYVE-type zinc finger occupies 56-107 (EGPNIVCKACGLSFSVFRKKHVCCDCKKDFCSVCSVLQENLRRCSTCHLLQE). Positions 115 to 134 (LMRLKVKDLRQYLILRNIPT) constitute an SAP 1 domain. A Phosphoserine modification is found at Ser-169. Positions 194-252 (QGELMDGDQTSRSGVPAQVQSEITSANTEDDDDDDDEDDDDEEENAEDQNPGLSKERVR) are disordered. Residues 201 to 220 (DQTSRSGVPAQVQSEITSAN) show a composition bias toward polar residues. Over residues 221 to 240 (TEDDDDDDDEDDDDEEENAE) the composition is skewed to acidic residues. A phosphoserine mark is found at Ser-254 and Ser-256. The 15-residue stretch at 264–278 (VEGMSVRQLKEILAR) folds into the SAP 2 domain. The RING-type zinc-finger motif lies at 325–360 (CRICMDAVIDCVLLECGHMVTCTKCGKRMSECPICR).

In terms of assembly, interacts with CASP8 and CASP10. Interacts with p53/TP53; involved in p53/TP53 ubiquitination. Interacts (via RING-type zinc finger) with MDM2; the interaction stabilizes MDM2. Interacts (via RING-type zinc finger) with PPARGC1A. Interacts with NOD1. In terms of processing, autoubiquitinated (in vitro). Proteolytically cleaved by caspases upon induction of apoptosis by TNF.

The protein resides in the cell membrane. The protein localises to the endomembrane system. It localises to the nucleus. Its subcellular location is the nucleus speckle. It is found in the cytoplasm. The protein resides in the cytosol. The enzyme catalyses S-ubiquitinyl-[E2 ubiquitin-conjugating enzyme]-L-cysteine + [acceptor protein]-L-lysine = [E2 ubiquitin-conjugating enzyme]-L-cysteine + N(6)-ubiquitinyl-[acceptor protein]-L-lysine.. The protein operates within protein modification; protein ubiquitination. In terms of biological role, E3 ubiquitin-protein ligase that regulates several biological processes through the ubiquitin-mediated proteasomal degradation of various target proteins. Ubiquitinates the caspases CASP8 and CASP10, promoting their proteasomal degradation, to negatively regulate cell death downstream of death domain receptors in the extrinsic pathway of apoptosis. May mediate 'Lys-48'-linked polyubiquitination of RIPK1 and its subsequent proteasomal degradation thereby indirectly regulating the tumor necrosis factor-mediated signaling pathway. Negatively regulates p53/TP53 through its direct ubiquitination and targeting to proteasomal degradation. Indirectly, may also negatively regulate p53/TP53 through ubiquitination and degradation of SFN. Mediates PPARGC1A proteasomal degradation probably through ubiquitination thereby indirectly regulating the metabolism of brown fat cells. Possibly involved in innate immunity, through 'Lys-48'-linked polyubiquitination of NOD1 and its subsequent proteasomal degradation. In Pongo abelii (Sumatran orangutan), this protein is E3 ubiquitin-protein ligase RNF34 (RNF34).